The following is a 631-amino-acid chain: Phosphomethylpyrimidine synthase (631 aa).

Substrate is bound by residues Asn-239, Met-268, Tyr-297, His-333, 353–355, 394–397, and Glu-433; these read SRG and DGLR. His-437 serves as a coordination point for Zn(2+). Tyr-460 is a binding site for substrate. His-501 contributes to the Zn(2+) binding site. [4Fe-4S] cluster is bound by residues Cys-581, Cys-584, and Cys-589.

Belongs to the ThiC family. Homodimer. [4Fe-4S] cluster is required as a cofactor.

It carries out the reaction 5-amino-1-(5-phospho-beta-D-ribosyl)imidazole + S-adenosyl-L-methionine = 4-amino-2-methyl-5-(phosphooxymethyl)pyrimidine + CO + 5'-deoxyadenosine + formate + L-methionine + 3 H(+). It functions in the pathway cofactor biosynthesis; thiamine diphosphate biosynthesis. In terms of biological role, catalyzes the synthesis of the hydroxymethylpyrimidine phosphate (HMP-P) moiety of thiamine from aminoimidazole ribotide (AIR) in a radical S-adenosyl-L-methionine (SAM)-dependent reaction. This is Phosphomethylpyrimidine synthase from Salmonella schwarzengrund (strain CVM19633).